Reading from the N-terminus, the 517-residue chain is Gamma-1-syntrophin (517 aa).

In terms of domain architecture, PDZ spans 57–140; it reads TVTIRRQTVG…EVTLTVSFLK (84 aa). The PH domain occupies 283 to 390; sequence QIVYMGWCEA…WERAFQTATF (108 aa).

The protein belongs to the syntrophin family. Interacts with the dystrophin protein DMD and related proteins DTNA and DTNB. Interacts with DGKZ.

It is found in the cytoplasm. Its subcellular location is the cytoskeleton. The protein localises to the nucleus. Its function is as follows. Adapter protein that binds to and probably organizes the subcellular localization of a variety of proteins. May link various receptors to the actin cytoskeleton and the dystrophin glycoprotein complex. May participate in regulating the subcellular location of diacylglycerol kinase-zeta to ensure that diacylglycerol is rapidly inactivated following receptor activation. In Mus musculus (Mouse), this protein is Gamma-1-syntrophin (Sntg1).